The primary structure comprises 134 residues: RxLR effector protein Avh238 (134 aa).

An N-terminal signal peptide occupies residues M1–A21. The short motif at R44–R68 is the RxLR-dEER element. The disordered stretch occupies residues D50–F72. A compositionally biased stretch (basic and acidic residues) spans D61 to P70.

The protein belongs to the RxLR effector family.

The protein resides in the secreted. It is found in the host cytoplasm. Its subcellular location is the host nucleus. Its function is as follows. Effector that, due to the lack of a histidine residue at position 79, is not able to induce cell death in tomato, tobacco, eggplant, potato, or in A.thaliana. The chain is RxLR effector protein Avh238 from Phytophthora sojae (Soybean stem and root rot agent).